The primary structure comprises 554 residues: Afadin- and alpha-actinin-binding protein A (554 aa).

2 coiled-coil regions span residues 122–287 (LEYL…SQRK) and 359–449 (ENGL…AIRL). The segment at 508–528 (LASSGDYSRRPSKALPITSSS) is disordered.

It belongs to the ADIP family. Interacts with WRAP73.

It is found in the cell junction. The protein resides in the adherens junction. It localises to the cytoplasm. The protein localises to the cytoskeleton. Its subcellular location is the microtubule organizing center. It is found in the centrosome. The protein resides in the centriolar satellite. In terms of biological role, belongs to an adhesion system, which plays a role in the organization of homotypic, interneuronal and heterotypic cell-cell adherens junctions (AJs). Involved in cell movement. Acts as a centrosome maturation factor, probably by maintaining the integrity of the pericentriolar material and proper microtubule nucleation at mitotic spindle poles. The function seems to implicate at least in part WRAP73; the SSX2IP:WRAP73 complex is proposed to act as regulator of spindle anchoring at the mitotic centrosome. The protein is Afadin- and alpha-actinin-binding protein A (ssx2ip-a) of Xenopus laevis (African clawed frog).